The primary structure comprises 944 residues: 2-oxoglutarate dehydrogenase E1 component (944 aa).

The segment at 915-944 (RRRSSPAEGDPTVHKKEQERIVSDSLTRKN) is disordered. A compositionally biased stretch (basic and acidic residues) spans 925 to 936 (PTVHKKEQERIV).

This sequence belongs to the alpha-ketoglutarate dehydrogenase family. As to quaternary structure, homodimer. Part of the 2-oxoglutarate dehydrogenase (OGDH) complex composed of E1 (2-oxoglutarate dehydrogenase), E2 (dihydrolipoamide succinyltransferase) and E3 (dihydrolipoamide dehydrogenase); the complex contains multiple copies of the three enzymatic components (E1, E2 and E3). Thiamine diphosphate serves as cofactor.

The enzyme catalyses N(6)-[(R)-lipoyl]-L-lysyl-[protein] + 2-oxoglutarate + H(+) = N(6)-[(R)-S(8)-succinyldihydrolipoyl]-L-lysyl-[protein] + CO2. Functionally, E1 component of the 2-oxoglutarate dehydrogenase (OGDH) complex which catalyzes the decarboxylation of 2-oxoglutarate, the first step in the conversion of 2-oxoglutarate to succinyl-CoA and CO(2). The polypeptide is 2-oxoglutarate dehydrogenase E1 component (Bacillus velezensis (strain DSM 23117 / BGSC 10A6 / LMG 26770 / FZB42) (Bacillus amyloliquefaciens subsp. plantarum)).